The following is a 554-amino-acid chain: Hydroxylamine reductase (554 aa).

[2Fe-2S] cluster contacts are provided by Cys-3, Cys-6, Cys-18, and Cys-25. 8 residues coordinate hybrid [4Fe-2O-2S] cluster: His-252, Glu-276, Cys-320, Cys-408, Cys-436, Cys-461, Glu-495, and Lys-497. Cys-408 carries the post-translational modification Cysteine persulfide.

The protein belongs to the HCP family. Requires [2Fe-2S] cluster as cofactor. Hybrid [4Fe-2O-2S] cluster serves as cofactor.

It is found in the cytoplasm. The enzyme catalyses A + NH4(+) + H2O = hydroxylamine + AH2 + H(+). Functionally, catalyzes the reduction of hydroxylamine to form NH(3) and H(2)O. This is Hydroxylamine reductase from Shewanella sp. (strain MR-7).